Here is a 171-residue protein sequence, read N- to C-terminus: Large ribosomal subunit protein bL9 (171 aa).

It belongs to the bacterial ribosomal protein bL9 family.

In terms of biological role, binds to the 23S rRNA. The protein is Large ribosomal subunit protein bL9 of Rickettsia conorii (strain ATCC VR-613 / Malish 7).